Here is a 152-residue protein sequence, read N- to C-terminus: Lipoprotein signal peptidase (152 aa).

Transmembrane regions (helical) follow at residues 55-75 and 85-105; these read NKMWFFYIITVVFVVFIVFYM and LGISLGLILGGAIGNFIDRVF. Residues aspartate 111 and aspartate 129 contribute to the active site. A helical membrane pass occupies residues 124 to 144; sequence VFNIADSALCIGVVLIIIQTL.

This sequence belongs to the peptidase A8 family.

It is found in the cell membrane. The enzyme catalyses Release of signal peptides from bacterial membrane prolipoproteins. Hydrolyzes -Xaa-Yaa-Zaa-|-(S,diacylglyceryl)Cys-, in which Xaa is hydrophobic (preferably Leu), and Yaa (Ala or Ser) and Zaa (Gly or Ala) have small, neutral side chains.. The protein operates within protein modification; lipoprotein biosynthesis (signal peptide cleavage). This protein specifically catalyzes the removal of signal peptides from prolipoproteins. The protein is Lipoprotein signal peptidase of Bacillus cereus (strain G9842).